Reading from the N-terminus, the 434-residue chain is Phosphomethylpyrimidine synthase 2 (434 aa).

Substrate-binding positions include M94, Y123, H162, 184-186 (SRG), 225-228 (NAMR), and E264. H268 contributes to the Zn(2+) binding site. Residue Y291 coordinates substrate. H332 contributes to the Zn(2+) binding site. Residues C408, C411, and C415 each contribute to the [4Fe-4S] cluster site.

This sequence belongs to the ThiC family. The cofactor is [4Fe-4S] cluster.

It carries out the reaction 5-amino-1-(5-phospho-beta-D-ribosyl)imidazole + S-adenosyl-L-methionine = 4-amino-2-methyl-5-(phosphooxymethyl)pyrimidine + CO + 5'-deoxyadenosine + formate + L-methionine + 3 H(+). It participates in cofactor biosynthesis; thiamine diphosphate biosynthesis. In terms of biological role, catalyzes the synthesis of the hydroxymethylpyrimidine phosphate (HMP-P) moiety of thiamine from aminoimidazole ribotide (AIR) in a radical S-adenosyl-L-methionine (SAM)-dependent reaction. The chain is Phosphomethylpyrimidine synthase 2 from Methanosphaera stadtmanae (strain ATCC 43021 / DSM 3091 / JCM 11832 / MCB-3).